Reading from the N-terminus, the 216-residue chain is Protein-methionine-sulfoxide reductase heme-binding subunit MsrQ (216 aa).

5 helical membrane passes run 16-36 (IWALYILGFLPAVWGFYLGAT), 48-68 (EHLLGIWALRFLIATLAITPI), 82-102 (ALGLLAFYYVMMHFLTYMVLD), 119-139 (FITIGMAALVLLIPLAVTSNI), and 155-175 (LVYVIAAAGALHFAMSVKVVG).

Belongs to the MsrQ family. Heterodimer of a catalytic subunit (MsrP) and a heme-binding subunit (MsrQ). FMN serves as cofactor. Requires heme b as cofactor.

Its subcellular location is the cell inner membrane. Functionally, part of the MsrPQ system that repairs oxidized periplasmic proteins containing methionine sulfoxide residues (Met-O), using respiratory chain electrons. Thus protects these proteins from oxidative-stress damage caused by reactive species of oxygen and chlorine generated by the host defense mechanisms. MsrPQ is essential for the maintenance of envelope integrity under bleach stress, rescuing a wide series of structurally unrelated periplasmic proteins from methionine oxidation. MsrQ provides electrons for reduction to the reductase catalytic subunit MsrP, using the quinone pool of the respiratory chain. The chain is Protein-methionine-sulfoxide reductase heme-binding subunit MsrQ from Rhizobium meliloti (strain 1021) (Ensifer meliloti).